The chain runs to 367 residues: Peptide chain release factor 2 (367 aa).

An N5-methylglutamine modification is found at Gln-254.

The protein belongs to the prokaryotic/mitochondrial release factor family. Post-translationally, methylated by PrmC. Methylation increases the termination efficiency of RF2.

It is found in the cytoplasm. Its function is as follows. Peptide chain release factor 2 directs the termination of translation in response to the peptide chain termination codons UGA and UAA. This chain is Peptide chain release factor 2, found in Neisseria meningitidis serogroup C / serotype 2a (strain ATCC 700532 / DSM 15464 / FAM18).